Consider the following 239-residue polypeptide: Ribonuclease 3 (239 aa).

An RNase III domain is found at 11–133 (HTAIQKKLGY…MFAAVSFDAD (123 aa)). Residue E46 coordinates Mg(2+). Residue D50 is part of the active site. D119 and E122 together coordinate Mg(2+). E122 is a catalytic residue. A DRBM domain is found at 160 to 230 (DGKTALQEAL…AKEALKWLEE (71 aa)).

It belongs to the ribonuclease III family. Homodimer. It depends on Mg(2+) as a cofactor.

Its subcellular location is the cytoplasm. It catalyses the reaction Endonucleolytic cleavage to 5'-phosphomonoester.. Digests double-stranded RNA. Involved in the processing of primary rRNA transcript to yield the immediate precursors to the large and small rRNAs (23S and 16S). Processes some mRNAs, and tRNAs when they are encoded in the rRNA operon. Processes pre-crRNA and tracrRNA of type II CRISPR loci if present in the organism. The sequence is that of Ribonuclease 3 from Neisseria gonorrhoeae (strain NCCP11945).